We begin with the raw amino-acid sequence, 333 residues long: Protein FLAP1 homolog A (333 aa).

The helical transmembrane segment at Val26–Ala46 threads the bilayer. Positions Ile53–Gly74 are disordered. Over residues Phe58–Gly70 the composition is skewed to low complexity. The next 2 helical transmembrane spans lie at Ile92–Ile112 and Gly261–Val281.

It belongs to the FLAP family.

Its subcellular location is the cellular thylakoid membrane. The protein localises to the cell inner membrane. Essential for photosynthetic growth under fluctuating light by modulating PxcA- and PxcL-dependent intracellular pH regulation via proton transport (e.g. transient pH reduction upon transition from dark to light followed by an increase in the light until light-to-dark shift). The protein is Protein FLAP1 homolog A of Synechocystis sp. (strain ATCC 27184 / PCC 6803 / Kazusa).